We begin with the raw amino-acid sequence, 391 residues long: Yellow-related salivary protein ASP4 (391 aa).

The N-terminal stretch at 1-18 is a signal peptide; sequence MKIFLCIIAVVSLQGVVA. Asn29 carries N-linked (GlcNAc...) asparagine glycosylation.

It belongs to the major royal jelly protein family. As to expression, female salivary gland (at protein level).

The protein localises to the secreted. Its function is as follows. Probably modulates blood feeding of sand flies on vertebrate species by binding and sequestering different mediators involved in the host response. Binds biogenic amines. Binds serotonin and dopamine with high affinity. Binds adrenaline, octopamine and adrenaline with medium affinity. Binds histamine with low affinity. This chain is Yellow-related salivary protein ASP4, found in Phlebotomus orientalis (Phlebotomine sand fly).